The sequence spans 414 residues: STAGA complex 65 subunit gamma (414 aa).

A disordered region spans residues 87 to 108; that stretch reads NQQQTEGVKTEESEPLPSCPGS. The residue at position 108 (Ser108) is a Phosphoserine. A Glycyl lysine isopeptide (Lys-Gly) (interchain with G-Cter in SUMO2) cross-link involves residue Lys271. Residues Ser323 and Ser334 each carry the phosphoserine modification. Positions 346–414 are disordered; sequence PQESEEGNVS…QRCKKRMRKI (69 aa). A compositionally biased stretch (low complexity) spans 386-395; sequence SSYGSHSTDS.

In terms of assembly, component of the STAGA transcription coactivator-HAT complex, at least composed of SUPT3H, SUPT7L, GCN5L2, TAF5L, TAF6L, TADA3L, TAD1L, TAF10, TAF12 and TAF9. Post-translationally, sumoylated. As to expression, expressed at high levels in adenocarcinomas and gliomas and low in esophageal cancers and malignant hematological disease. Also expressed at high level in the thymus, low in peripheral blood mononuclear cells, and lowest in the stomach, small intestine, and skeletal muscle.

The protein resides in the nucleus. The polypeptide is STAGA complex 65 subunit gamma (SUPT7L) (Homo sapiens (Human)).